The chain runs to 311 residues: uncharacterized protein (311 aa).

A run of 10 helical transmembrane segments spans residues 6-26 (IFIL…KMLA), 33-53 (PFQV…PMAV), 70-90 (YLAL…QFAV), 97-117 (TAAV…YFIL), 123-143 (GITI…FNPA), 155-175 (LIGI…TVIS), 185-205 (YVFN…LLVV), 219-239 (ILVL…CYLG), 244-264 (TSAV…TVLA), and 265-285 (ILIL…FIII). 2 EamA domains span residues 12–141 (AIFY…IIFN) and 166–292 (VVWS…INYS).

This sequence belongs to the EamA transporter family.

It is found in the cell membrane. This is an uncharacterized protein from Clostridium kluyveri (strain ATCC 8527 / DSM 555 / NBRC 12016 / NCIMB 10680 / K1).